The primary structure comprises 698 residues: Putative transposon gamma-delta 80.3 kDa protein (698 aa).

The protein is Putative transposon gamma-delta 80.3 kDa protein (tnpX) of Escherichia coli (strain K12).